Reading from the N-terminus, the 118-residue chain is Protein TusC (118 aa).

Belongs to the DsrF/TusC family. As to quaternary structure, heterohexamer, formed by a dimer of trimers. The hexameric TusBCD complex contains 2 copies each of TusB, TusC and TusD. The TusBCD complex interacts with TusE.

The protein localises to the cytoplasm. Functionally, part of a sulfur-relay system required for 2-thiolation of 5-methylaminomethyl-2-thiouridine (mnm(5)s(2)U) at tRNA wobble positions. In Salmonella paratyphi C (strain RKS4594), this protein is Protein TusC.